A 394-amino-acid polypeptide reads, in one-letter code: Deoxyguanosinetriphosphate triphosphohydrolase-like protein (394 aa).

Residues Met1–Phe36 form a disordered region. The span at Phe25–Phe36 shows a compositional bias: basic and acidic residues. The 141-residue stretch at Arg70–Asn210 folds into the HD domain.

This sequence belongs to the dGTPase family. Type 2 subfamily.

In Caulobacter vibrioides (strain ATCC 19089 / CIP 103742 / CB 15) (Caulobacter crescentus), this protein is Deoxyguanosinetriphosphate triphosphohydrolase-like protein.